A 182-amino-acid polypeptide reads, in one-letter code: MQLNIPTWLTLFRVVLIPFFVLAFYLPFVWAPMVCAIIFVFAAATDWFDGFLARRWKQTTRFGAFLDPVADKVMVAVALVLVAEHYHSWWITLPAATMIAREIIISSLREWMAEIGKRSSVAVSWVGKVKTMAQMGSLVGLLWRPDHNVELASFVLLYIAAVLTFWSMFQYLNAAWSDLLEP.

The Cytoplasmic portion of the chain corresponds to 1 to 12 (MQLNIPTWLTLF). Residues 13–37 (RVVLIPFFVLAFYLPFVWAPMVCAI) form a helical membrane-spanning segment. The Periplasmic segment spans residues 38–60 (IFVFAAATDWFDGFLARRWKQTT). The chain crosses the membrane as a helical span at residues 61-81 (RFGAFLDPVADKVMVAVALVL). At 82-86 (VAEHY) the chain is on the cytoplasmic side. The chain crosses the membrane as a helical span at residues 87–107 (HSWWITLPAATMIAREIIISS). At 108–145 (LREWMAEIGKRSSVAVSWVGKVKTMAQMGSLVGLLWRP) the chain is on the periplasmic side. The chain crosses the membrane as a helical span at residues 146–168 (DHNVELASFVLLYIAAVLTFWSM). At 169–181 (FQYLNAAWSDLLE) the chain is on the cytoplasmic side.

This sequence belongs to the CDP-alcohol phosphatidyltransferase class-I family.

The protein localises to the cell inner membrane. It carries out the reaction a CDP-1,2-diacyl-sn-glycerol + sn-glycerol 3-phosphate = a 1,2-diacyl-sn-glycero-3-phospho-(1'-sn-glycero-3'-phosphate) + CMP + H(+). The protein operates within phospholipid metabolism; phosphatidylglycerol biosynthesis; phosphatidylglycerol from CDP-diacylglycerol: step 1/2. Catalyzes the conversion of cytidine diphosphate diacylglycerol (CDP-DG) and glycerol 3-phosphate into phosphatidylglycerol. Essential for the synthesis of anionic phospholipids, thereby playing a role in balancing the ratio of zwitterionic and anionic phospholipids, which is thought to be important for normal membrane function. This chain is CDP-diacylglycerol--glycerol-3-phosphate 3-phosphatidyltransferase, found in Yersinia pestis bv. Antiqua (strain Antiqua).